Consider the following 396-residue polypeptide: MKIMSVNSGSSSLKFQLLEMPQKNLITSGLIERIGSNNATFTLKNQNHKTSKTLEIKNHQQAVSLLLTSLIENKIIARLEDIDGVGHRIVQGGELFQDATALNDVEIAKIESLCDLAPLHNPANLVSIKAFRQVLPSLFQVGVFDTTFHQTIPVKNFLYATPYAWYQKYKVRKYGFHGISYQYITEQMQQLLNKKDAKLIICHAGNGVSLCAVDSGKSIDTSMGFTPLEGVPMGTRSGNIDPAVIKFIAEKENKGIAEITDDLNKKSGLLGVSTISNDARDILAEIKKGNPQARLAFDIQIKRIVDYIASYYVLLKGIDALVFTAGIGENSSFFRSEIIKRLSVLGFRLDEQKNEVQGKTSVITSSDSLQQAFVVPTNEELSIACDVLRIYKKVKK.

Asn-7 is a Mg(2+) binding site. Residue Lys-14 coordinates ATP. Arg-88 lines the substrate pocket. Catalysis depends on Asp-145, which acts as the Proton donor/acceptor. Residues 203–207, 278–280, and 326–330 each bind ATP; these read HAGNG, DAR, and GIGEN. Glu-379 is a binding site for Mg(2+).

This sequence belongs to the acetokinase family. In terms of assembly, homodimer. The cofactor is Mg(2+). Requires Mn(2+) as cofactor.

The protein localises to the cytoplasm. It carries out the reaction acetate + ATP = acetyl phosphate + ADP. It functions in the pathway metabolic intermediate biosynthesis; acetyl-CoA biosynthesis; acetyl-CoA from acetate: step 1/2. In terms of biological role, catalyzes the formation of acetyl phosphate from acetate and ATP. Can also catalyze the reverse reaction. In Phytoplasma australiense, this protein is Acetate kinase.